We begin with the raw amino-acid sequence, 205 residues long: High frequency lysogenization protein HflD homolog (205 aa).

The protein belongs to the HflD family.

The protein localises to the cytoplasm. It localises to the cell inner membrane. The protein is High frequency lysogenization protein HflD homolog of Shewanella halifaxensis (strain HAW-EB4).